Reading from the N-terminus, the 364-residue chain is tRNA-specific 2-thiouridylase MnmA (364 aa).

ATP is bound by residues 12–19 (GISGGVDS) and M38. The interval 98–100 (NPD) is interaction with target base in tRNA. Catalysis depends on C103, which acts as the Nucleophile. A disulfide bridge connects residues C103 and C199. G127 is an ATP binding site. Residues 149-151 (KEQ) are interaction with tRNA. Catalysis depends on C199, which acts as the Cysteine persulfide intermediate. The segment at 311 to 312 (RY) is interaction with tRNA.

Belongs to the MnmA/TRMU family.

It is found in the cytoplasm. The catalysed reaction is S-sulfanyl-L-cysteinyl-[protein] + uridine(34) in tRNA + AH2 + ATP = 2-thiouridine(34) in tRNA + L-cysteinyl-[protein] + A + AMP + diphosphate + H(+). Its function is as follows. Catalyzes the 2-thiolation of uridine at the wobble position (U34) of tRNA, leading to the formation of s(2)U34. This is tRNA-specific 2-thiouridylase MnmA from Hahella chejuensis (strain KCTC 2396).